The following is a 352-amino-acid chain: Probable dual-specificity RNA methyltransferase RlmN (352 aa).

The Proton acceptor role is filled by glutamate 92. One can recognise a Radical SAM core domain in the interval 98–328 (YKHGFTACIS…ATIRREMGTD (231 aa)). An intrachain disulfide couples cysteine 105 to cysteine 333. 3 residues coordinate [4Fe-4S] cluster: cysteine 112, cysteine 116, and cysteine 119. S-adenosyl-L-methionine is bound by residues 159–160 (GE), serine 191, 214–216 (SLH), and asparagine 290. Residue cysteine 333 is the S-methylcysteine intermediate of the active site.

Belongs to the radical SAM superfamily. RlmN family. [4Fe-4S] cluster is required as a cofactor.

The protein resides in the cytoplasm. The catalysed reaction is adenosine(2503) in 23S rRNA + 2 reduced [2Fe-2S]-[ferredoxin] + 2 S-adenosyl-L-methionine = 2-methyladenosine(2503) in 23S rRNA + 5'-deoxyadenosine + L-methionine + 2 oxidized [2Fe-2S]-[ferredoxin] + S-adenosyl-L-homocysteine. It catalyses the reaction adenosine(37) in tRNA + 2 reduced [2Fe-2S]-[ferredoxin] + 2 S-adenosyl-L-methionine = 2-methyladenosine(37) in tRNA + 5'-deoxyadenosine + L-methionine + 2 oxidized [2Fe-2S]-[ferredoxin] + S-adenosyl-L-homocysteine. Specifically methylates position 2 of adenine 2503 in 23S rRNA and position 2 of adenine 37 in tRNAs. The chain is Probable dual-specificity RNA methyltransferase RlmN from Alkaliphilus metalliredigens (strain QYMF).